A 438-amino-acid chain; its full sequence is Thymidine phosphorylase (438 aa).

It belongs to the thymidine/pyrimidine-nucleoside phosphorylase family. As to quaternary structure, homodimer.

The catalysed reaction is thymidine + phosphate = 2-deoxy-alpha-D-ribose 1-phosphate + thymine. The protein operates within pyrimidine metabolism; dTMP biosynthesis via salvage pathway; dTMP from thymine: step 1/2. Its function is as follows. The enzymes which catalyze the reversible phosphorolysis of pyrimidine nucleosides are involved in the degradation of these compounds and in their utilization as carbon and energy sources, or in the rescue of pyrimidine bases for nucleotide synthesis. The polypeptide is Thymidine phosphorylase (Colwellia psychrerythraea (strain 34H / ATCC BAA-681) (Vibrio psychroerythus)).